Consider the following 376-residue polypeptide: F-box/kelch-repeat protein At1g67480 (376 aa).

The region spanning 37 to 85 (DPLIPGLPDDVAKQCLALVPRARFPSMGSVCKKWRFVVQSKEFITVRRL) is the F-box domain. Kelch repeat units follow at residues 139-189 (KLLV…EVNG), 190-237 (HVYV…AFNG), 239-289 (LYVM…LFCI), and 291-335 (WKNH…LLFS).

In Arabidopsis thaliana (Mouse-ear cress), this protein is F-box/kelch-repeat protein At1g67480.